A 158-amino-acid chain; its full sequence is Acetolactate synthase small subunit (158 aa).

In terms of domain architecture, ACT spans 4-79 (MIIAKLHNVT…DVIEVADITD (76 aa)).

This sequence belongs to the acetolactate synthase small subunit family. As to quaternary structure, dimer of large and small chains.

The enzyme catalyses 2 pyruvate + H(+) = (2S)-2-acetolactate + CO2. Its pathway is amino-acid biosynthesis; L-isoleucine biosynthesis; L-isoleucine from 2-oxobutanoate: step 1/4. It functions in the pathway amino-acid biosynthesis; L-valine biosynthesis; L-valine from pyruvate: step 1/4. In Lactococcus lactis subsp. lactis (strain IL1403) (Streptococcus lactis), this protein is Acetolactate synthase small subunit (ilvH).